A 1730-amino-acid chain; its full sequence is Nebulin-related-anchoring protein (1730 aa).

Residues 4–64 (QPCSRCGYGV…HAHNPKNNTF (61 aa)) enclose the LIM zinc-binding domain. 44 Nebulin repeats span residues 63-97 (TFTSVYHTPLNLNVRTFPEAISGIHDQEDGEQCKS), 156-166 (EYTEDYEQPRG), 175-202 (TPAYQRAKKANQLASQVEYKRGHDERIS), 203-237 (RFSTVVDTPELLRSKAGAQLQSDVRYTEDYEQQRG), 246-273 (TPAYQIAKRANELASDVRYHQQYQKEMR), 298-307 (YPEEYEEHRG), 316-343 (TPAYQNAKKAHELASDIKYRQDFNKMKG), 348-382 (HSLPAQDNLVLKQAQSVNKLVSEVEYKKDLESSRG), 389-417 (ETPQFRNVSKISKFTSDNKYKENYQNHMR), 419-453 (RYEGVGMDRRTLHAMKVGSLASNVAYKADYKHDIV), 487-521 (KYSSVTDTPQIVQAKINAQQLSHVNYRADYEKNKL), 522-556 (NYTLPQDVPQLVKAKTNAKLFSEVKYKEGWEKTKG), 558-592 (GFEMKLDAMSLLAAKASGELASNIKYKEEYEKTKG), 602-626 (LLHSLQIAKMSSEVEYKKGFEESKT), 627-661 (RFHLPMDMVNIRHAKKAQTLASDLDYRKKLHEYTV), 662-692 (LPEDMKTQWAKKAYGLQSELQYKADLAWMKG), 702-724 (NLEQAKKAGQLVSEKNYRQRVDE), 726-760 (KFTSVTDSSQMEHAKKSQELQSGVAYKAGNEQSVH), 761-795 (QYTISKDEPLFLQARANAANLSEKLYKSSWENQKA), 797-831 (GFELRLDSLTFLAAKAKRDLASEVKYKEDYERSRG), 844-869 (QMSHSLQMSKLQSELEYKKGFEDTKS), 870-896 (QCHVSLDMVHLVHARKAQHLATDVGYK), 901-935 (HFTALPTDMKVEWAKKAYGLQSDNQYRADVKWMKG), 945-963 (NVEQAKKAGELISEKKYRQ), 969-1003 (KFTSIKDTPEMVQARISYTQAVDRLYREQGENIKH), 1004-1038 (HYTPTADLPEVLLAKLNAMNISETRYKESWSKLRD), 1040-1074 (GYKLRLDALPFQAAKASGEIISDYKYKEAFEKMKG), 1078-1112 (GSRSLEDDISLAHSVYATSLQSDVNYKKGFEHSKA), 1113-1139 (QFHLPLDMAALVHAKKAQTLASNQDYK), 1144-1178 (QYTSLAEDLRLSCAKKAHKLQSENLYRSDLNFMRG), 1183-1206 (IPGTLEIEGRKKASELISESKYRQ), 1212-1246 (KYTAVTDTPNLLHAKFSNQITNERLYKAAGEDARH), 1247-1281 (EYTMTLGLPEFIRAKTNAANLSDARYKESWRNLRA), 1283-1317 (GYKLTIEALPFQAARASGDIASDFLYRHDFVKERG), 1321-1355 (GPQSVRDDPRIQHCRRMGQLQSELQYRRGATSSQA), 1356-1390 (QFHLPMDMVHLVHAKNAQALASDHDYRTQYHKFTA), 1391-1421 (LPEDLKMAWAKKAHALQSELRYKSDLIGMKG), 1429-1449 (SPQMESAKKAGELISETKYRK), 1455-1481 (KFTTVVDSPDLVHAKNSYMHCNERMYR), 1490-1524 (RYTLIPDHPDFTRARLNALHLSDKVYRNSWEQTRA), 1526-1560 (SYDFRLDAIPFQTARASREIASDFRYKEAFLRDRG), 1564-1598 (GYRSVDDDPRMKHFLNVGRLQSDNEYKKDFAKSRS), 1599-1626 (QFHSSTDQPGLLQAKRSQQLASDVHYRQ), and 1640-1664 (LRHAQKAHQLQSDVKYKSDLNLTRG). Phosphoserine is present on Ser1081. Positions 1595 to 1620 (KSRSQFHSSTDQPGLLQAKRSQQLAS) are disordered. The segment covering 1596–1606 (SRSQFHSSTDQ) has biased composition (polar residues).

As to quaternary structure, interacts with actin, alpha-actinin, KLHL41, TLN1 and VCL. Interacts with CSRP3. As to expression, expressed in cardiac and skeletal muscle.

Its function is as follows. May be involved in anchoring the terminal actin filaments in the myofibril to the membrane and in transmitting tension from the myofibrils to the extracellular matrix. The chain is Nebulin-related-anchoring protein from Homo sapiens (Human).